A 70-amino-acid chain; its full sequence is MKNDKLFLTGKILEIIHGDKYRVMLENNVEVDAHLAGKMKMKRTKILPGDVVEVEFSPYDLKLGRITQRK.

In terms of domain architecture, S1-like spans 1–70 (MKNDKLFLTG…LKLGRITQRK (70 aa)).

This sequence belongs to the IF-1 family. In terms of assembly, component of the 30S ribosomal translation pre-initiation complex which assembles on the 30S ribosome in the order IF-2 and IF-3, IF-1 and N-formylmethionyl-tRNA(fMet); mRNA recruitment can occur at any time during PIC assembly.

The protein localises to the cytoplasm. One of the essential components for the initiation of protein synthesis. Stabilizes the binding of IF-2 and IF-3 on the 30S subunit to which N-formylmethionyl-tRNA(fMet) subsequently binds. Helps modulate mRNA selection, yielding the 30S pre-initiation complex (PIC). Upon addition of the 50S ribosomal subunit IF-1, IF-2 and IF-3 are released leaving the mature 70S translation initiation complex. This chain is Translation initiation factor IF-1, found in Mycoplasma genitalium (strain ATCC 33530 / DSM 19775 / NCTC 10195 / G37) (Mycoplasmoides genitalium).